The following is an 89-amino-acid chain: Small ribosomal subunit protein uS15 (89 aa).

Belongs to the universal ribosomal protein uS15 family. Part of the 30S ribosomal subunit. Forms a bridge to the 50S subunit in the 70S ribosome, contacting the 23S rRNA.

One of the primary rRNA binding proteins, it binds directly to 16S rRNA where it helps nucleate assembly of the platform of the 30S subunit by binding and bridging several RNA helices of the 16S rRNA. In terms of biological role, forms an intersubunit bridge (bridge B4) with the 23S rRNA of the 50S subunit in the ribosome. The sequence is that of Small ribosomal subunit protein uS15 from Rhizobium leguminosarum bv. trifolii (strain WSM2304).